We begin with the raw amino-acid sequence, 935 residues long: Isoleucine--tRNA ligase (935 aa).

A 'HIGH' region motif is present at residues 58-68 (PYANGSIHVGH). Glu558 contacts L-isoleucyl-5'-AMP. The 'KMSKS' region signature appears at 599-603 (KMSKS). Position 602 (Lys602) interacts with ATP. Zn(2+)-binding residues include Cys897, Cys900, Cys917, and Cys920.

Belongs to the class-I aminoacyl-tRNA synthetase family. IleS type 1 subfamily. As to quaternary structure, monomer. It depends on Zn(2+) as a cofactor.

Its subcellular location is the cytoplasm. The enzyme catalyses tRNA(Ile) + L-isoleucine + ATP = L-isoleucyl-tRNA(Ile) + AMP + diphosphate. Functionally, catalyzes the attachment of isoleucine to tRNA(Ile). As IleRS can inadvertently accommodate and process structurally similar amino acids such as valine, to avoid such errors it has two additional distinct tRNA(Ile)-dependent editing activities. One activity is designated as 'pretransfer' editing and involves the hydrolysis of activated Val-AMP. The other activity is designated 'posttransfer' editing and involves deacylation of mischarged Val-tRNA(Ile). This is Isoleucine--tRNA ligase from Francisella tularensis subsp. tularensis (strain SCHU S4 / Schu 4).